The chain runs to 147 residues: Epididymal secretory protein E3-alpha (147 aa).

An N-terminal signal peptide occupies residues Met1–Ser25.

As to expression, epididymis, with predominant expression in the corpus region. Moderately expressed in the vas deferens; only low levels are detectable in the caput and cauda regions.

Its subcellular location is the secreted. Functionally, possible function in sperm maturation. The sequence is that of Epididymal secretory protein E3-alpha (EDDM3A) from Homo sapiens (Human).